The sequence spans 449 residues: Phosphoglucosamine mutase (449 aa).

Ser-101 serves as the catalytic Phosphoserine intermediate. Mg(2+) is bound by residues Ser-101, Asp-243, Asp-245, and Asp-247. Position 101 is a phosphoserine (Ser-101).

This sequence belongs to the phosphohexose mutase family. Mg(2+) serves as cofactor. Activated by phosphorylation.

It carries out the reaction alpha-D-glucosamine 1-phosphate = D-glucosamine 6-phosphate. Functionally, catalyzes the conversion of glucosamine-6-phosphate to glucosamine-1-phosphate. In Syntrophus aciditrophicus (strain SB), this protein is Phosphoglucosamine mutase.